The following is a 511-amino-acid chain: MKCLLYLAFLFIGVNCKFTIVFPHNQKGNWKNVPSNYHYCPSSSDLNWHNDLIGTALQVKMPKSHKAIQADGWMCHASKWVTTCDFRWYGPKYITHSIRSFTPSVEQCKESIEQTKQGTWLNPGFPPQSCGYATVTDAEAAIVQVTPHHVLVDEYTGEWVDSQFINGKCSNDICPTVHNSTTWHSDYKVKGLCDSNLISTDITFFSEDGELSSLGKEGTGFRSNYFAYETGDKACKMQYCKHWGVRLPSGVWFEMADKDLFAAARFPECPEGSSISAPSQTSVDVSLIQDVERILDYSLCQETWSKIRAGLPISPVDLSYLAPKNPGTGPVFTIINGTLKYFETRYIRVDIAAPILSRMVGMISGTTTERELWDDWAPYEDVEIGPNGVLRTSLGYKFPLYMIGHGMLDSDLHLSSKAQVFEHPHIQDAASQLPDDETLFFGDTGLSKNPIEFVEGWFSSWKSSIASFFFIIGLIIGLFLVLRVGIYLCIKLKHTKKRQIYTDIEMNRLGK.

A signal peptide spans 1–16 (MKCLLYLAFLFIGVNC). Residues 17 to 467 (KFTIVFPHNQ…FSSWKSSIAS (451 aa)) are Virion surface-facing. Residues 18-35 (FTIVFPHNQKGNWKNVPS) form a trimerization region. Cystine bridges form between cysteine 40–cysteine 300, cysteine 75–cysteine 108, cysteine 84–cysteine 130, cysteine 169–cysteine 174, cysteine 193–cysteine 240, and cysteine 235–cysteine 269. The fusion peptide stretch occupies residues 53–172 (IGTALQVKMP…QFINGKCSND (120 aa)). Asparagine 179 is a glycosylation site (N-linked (GlcNAc...) asparagine; by host). The segment at 259-309 (DLFAAARFPECPEGSSISAPSQTSVDVSLIQDVERILDYSLCQETWSKIRA) is trimerization. An N-linked (GlcNAc...) asparagine; by host glycan is attached at asparagine 336. Residues 383–405 (EIGPNGVLRTSLGYKFPLYMIGH) form a trimerization region. A helical transmembrane segment spans residues 468-488 (FFFIIGLIIGLFLVLRVGIYL). The S-palmitoyl cysteine; by host moiety is linked to residue cysteine 489. Over 489–511 (CIKLKHTKKRQIYTDIEMNRLGK) the chain is Intravirion. The basolateral targeting ex vivo signature appears at 496 to 506 (KKRQIYTDIEM).

Belongs to the vesiculovirus glycoprotein family. In terms of assembly, homotrimer. Interacts with host LDL at target cell surface. Glycosylated by host. Palmitoylated by host.

Its subcellular location is the virion membrane. It is found in the host membrane. Its function is as follows. Attaches the virus to host LDL receptors, inducing clathrin-dependent endocytosis of the virion. In the endosome, the acidic pH induces conformational changes in the glycoprotein trimer, which trigger fusion between virus and endosomal membrane. This Vesicular stomatitis Indiana virus (strain Orsay) (VSIV) protein is Glycoprotein (G).